Here is a 655-residue protein sequence, read N- to C-terminus: p-hydroxybenzoic acid efflux pump subunit AaeB (655 aa).

Over Met-1–Arg-12 the chain is Periplasmic. The helical transmembrane segment at Phe-13–Leu-33 threads the bilayer. Over Glu-34–Arg-37 the chain is Cytoplasmic. Residues Trp-38 to Pro-58 form a helical membrane-spanning segment. Residues Tyr-59–Phe-68 lie on the Periplasmic side of the membrane. Residues Leu-69–Ile-89 form a helical membrane-spanning segment. The Cytoplasmic segment spans residues Arg-90–Pro-92. A helical membrane pass occupies residues Leu-93–Val-113. The Periplasmic portion of the chain corresponds to Arg-114–Ala-120. The chain crosses the membrane as a helical span at residues Trp-121–Leu-141. Residues Thr-142–Ser-151 lie on the Cytoplasmic side of the membrane. A helical transmembrane segment spans residues Glu-152–Ile-172. Over Lys-173 to Thr-369 the chain is Periplasmic. A helical membrane pass occupies residues Leu-370 to Val-390. Residues Thr-391–Asp-406 are Cytoplasmic-facing. A helical membrane pass occupies residues Phe-407–Pro-427. Residues Asn-428–Gln-430 are Periplasmic-facing. The chain crosses the membrane as a helical span at residues Gln-431–Val-451. Over Gln-452–Ser-458 the chain is Cytoplasmic. The helical transmembrane segment at Met-459–Phe-479 threads the bilayer. Residues Ser-480–Gln-481 lie on the Periplasmic side of the membrane. The chain crosses the membrane as a helical span at residues Phe-482–Leu-502. Topologically, residues Val-503 to Ser-655 are cytoplasmic.

It belongs to the aromatic acid exporter ArAE (TC 2.A.85) family.

The protein localises to the cell inner membrane. Forms an efflux pump with AaeA. Could function as a metabolic relief valve, allowing to eliminate certain compounds when they accumulate to high levels in the cell. This Escherichia coli O157:H7 protein is p-hydroxybenzoic acid efflux pump subunit AaeB.